A 483-amino-acid polypeptide reads, in one-letter code: CdaA regulatory protein CdaR (483 aa).

The helical transmembrane segment at 9 to 26 threads the bilayer; that stretch reads WAVKIIALLFALLLYVAV. YbbR-like domains lie at 55-135, 143-228, 237-316, and 329-394; these read IPVK…TVTI, FPVE…KITV, VPFK…TLHI, and VPIK…VNGP. The disordered stretch occupies residues 410–483; that stretch reads LTSKKSNTST…STANSQSSSE (74 aa). Residues 413–430 are compositionally biased toward low complexity; that stretch reads KKSNTSTNDNSSNTSGNQ. The segment covering 431 to 454 has biased composition (basic and acidic residues); that stretch reads DTDKQTNDQKNNQQEDTKNTDKNN.

As to quaternary structure, interacts with CdaA.

Its subcellular location is the cell membrane. Its function is as follows. Upon coexpression in E.coli stimulates the diadenylate cyclase activity of CdaA about 20-fold. In B.subtilis c-di-AMP is a second messenger that mediates growth, DNA repair and cell wall homeostasis; it is toxic when present in excess. In Bacillus subtilis (strain 168), this protein is CdaA regulatory protein CdaR.